The primary structure comprises 432 residues: Pachytene checkpoint protein 2 homolog (432 aa).

Position 179-186 (179-186 (GPPGTGKT)) interacts with ATP.

Belongs to the AAA ATPase family. PCH2 subfamily.

Functionally, plays a key role in chromosome recombination and chromosome structure development during meiosis. Required at early steps in meiotic recombination that leads to non-crossovers pathways. Also needed for efficient completion of homologous synapsis by influencing crossover distribution along the chromosomes affecting both crossovers and non-crossovers pathways. This Xenopus tropicalis (Western clawed frog) protein is Pachytene checkpoint protein 2 homolog (trip13).